The following is a 243-amino-acid chain: Orotidine 5'-phosphate decarboxylase (243 aa).

Residues Asp19, Lys41, 69–78 (DLKFFDIPAT), Thr124, Arg185, Gln194, Gly214, and Arg215 contribute to the substrate site. The Proton donor role is filled by Lys71.

Belongs to the OMP decarboxylase family. Type 1 subfamily. In terms of assembly, homodimer.

It catalyses the reaction orotidine 5'-phosphate + H(+) = UMP + CO2. Its pathway is pyrimidine metabolism; UMP biosynthesis via de novo pathway; UMP from orotate: step 2/2. Its function is as follows. Catalyzes the decarboxylation of orotidine 5'-monophosphate (OMP) to uridine 5'-monophosphate (UMP). The protein is Orotidine 5'-phosphate decarboxylase of Xanthomonas oryzae pv. oryzae (strain MAFF 311018).